Reading from the N-terminus, the 462-residue chain is Phosphoglucosamine mutase (462 aa).

Ser-111 acts as the Phosphoserine intermediate in catalysis. The Mg(2+) site is built by Ser-111, Asp-250, Asp-252, and Asp-254. Ser-111 carries the phosphoserine modification.

Belongs to the phosphohexose mutase family. Mg(2+) is required as a cofactor. Activated by phosphorylation.

It carries out the reaction alpha-D-glucosamine 1-phosphate = D-glucosamine 6-phosphate. In terms of biological role, catalyzes the conversion of glucosamine-6-phosphate to glucosamine-1-phosphate. The sequence is that of Phosphoglucosamine mutase from Synechococcus sp. (strain WH7803).